Here is a 523-residue protein sequence, read N- to C-terminus: Mogroside I-A1 synthase (523 aa).

The active-site Proton acceptor is H39. The active-site Charge relay is D136. UDP-alpha-D-glucose-binding residues include S311, Q374, W392, N393, S394, E397, D413, and Q414.

The protein belongs to the UDP-glycosyltransferase family. In terms of tissue distribution, highly expressed in young fruits 15 and 34 days after anthesis (15-DAA and 34-DAA).

It carries out the reaction mogrol + UDP-alpha-D-glucose = mogroside I-A1 + UDP + H(+). The enzyme catalyses mogroside I-A1 + UDP-alpha-D-glucose = mogroside IIE + UDP + H(+). It catalyses the reaction mogroside IE + UDP-alpha-D-glucose = mogroside IIE + UDP + H(+). The catalysed reaction is mogroside II-A1 + UDP-alpha-D-glucose = mogroside IIIX + UDP + H(+). It carries out the reaction mogroside II-A + UDP-alpha-D-glucose = mogroside III + UDP + H(+). The enzyme catalyses mogroside IIE + UDP-alpha-D-glucose = mogroside III-C3(1-&gt;6) + UDP + H(+). It catalyses the reaction mogroside III + UDP-alpha-D-glucose = isomogroside IV + UDP + H(+). The catalysed reaction is mogroside III + UDP-alpha-D-glucose = mogroside IV + UDP + H(+). It carries out the reaction mogroside IIIX + UDP-alpha-D-glucose = mogroside IVA + UDP + H(+). The enzyme catalyses siamenoside I + UDP-alpha-D-glucose = isomogroside V + UDP + H(+). Its pathway is secondary metabolite biosynthesis; terpenoid biosynthesis. In terms of biological role, UDP-glycosyltransferase involved in the biosynthesis of cucurbitacin and mogroside tetracyclic triterpene natural products (e.g. siamenoside I and mogrosides IV, V and VI). Cucurbitacins have cytotoxic properties and exhibit deterrent taste as a defense barrier against herbivores. Mogrosides are nonsugar highly oxygenated compounds used as high-intensity zero-calorie sweeteners; they also possess pharmacological properties such as regulating immunity, lowering blood sugar and lipid levels, protecting the liver, and acting as antioxidants and antitumor agents. Catalyzes the C24 primary glucosylation of mogrol and mogroside I-E1, and the C3 primary glucosylation of mogroside I-A1, mogroside II-A1 and mogroside II-A. Also supports branching glucosylations of mogroside II-E, mogroside III, mogroside IIIx and siamenoside I. The polypeptide is Mogroside I-A1 synthase (Siraitia grosvenorii (Monk's fruit)).